A 154-amino-acid chain; its full sequence is NADPH-dependent 7-cyano-7-deazaguanine reductase (154 aa).

Residues 1-13 (MSKTDVSGLSQLG) show a composition bias toward polar residues. Positions 1 to 24 (MSKTDVSGLSQLGRQVDAPTSPET) are disordered. The Thioimide intermediate role is filled by C52. The active-site Proton donor is D59. Substrate-binding positions include 74–76 (VES) and 93–94 (HE).

The protein belongs to the GTP cyclohydrolase I family. QueF type 1 subfamily.

The protein localises to the cytoplasm. The enzyme catalyses 7-aminomethyl-7-carbaguanine + 2 NADP(+) = 7-cyano-7-deazaguanine + 2 NADPH + 3 H(+). Its pathway is tRNA modification; tRNA-queuosine biosynthesis. Functionally, catalyzes the NADPH-dependent reduction of 7-cyano-7-deazaguanine (preQ0) to 7-aminomethyl-7-deazaguanine (preQ1). This Allorhizobium ampelinum (strain ATCC BAA-846 / DSM 112012 / S4) (Agrobacterium vitis (strain S4)) protein is NADPH-dependent 7-cyano-7-deazaguanine reductase.